Consider the following 90-residue polypeptide: UPF0213 protein lmo0166 (90 aa).

Positions 5-80 (SEHFFYVLKC…KKLSRKNKDA (76 aa)) constitute a GIY-YIG domain.

The protein belongs to the UPF0213 family.

This is UPF0213 protein lmo0166 from Listeria monocytogenes serovar 1/2a (strain ATCC BAA-679 / EGD-e).